A 274-amino-acid chain; its full sequence is NAD-dependent protein deacylase (274 aa).

A Deacetylase sirtuin-type domain is found at Cys-4 to Pro-274. NAD(+) is bound at residue Gly-29 to Trp-48. Substrate contacts are provided by Tyr-73 and Arg-76. Residue Gln-111–Asp-114 participates in NAD(+) binding. The Proton acceptor role is filled by His-129. Cys-137, Cys-140, Cys-178, and Cys-183 together coordinate Zn(2+). NAD(+)-binding positions include Gly-220–Ser-222, Asn-246–Glu-248, and Cys-264.

Belongs to the sirtuin family. Class III subfamily. Zn(2+) is required as a cofactor.

It localises to the mitochondrion. The catalysed reaction is N(6)-malonyl-L-lysyl-[protein] + NAD(+) + H2O = 2''-O-malonyl-ADP-D-ribose + nicotinamide + L-lysyl-[protein]. The enzyme catalyses N(6)-succinyl-L-lysyl-[protein] + NAD(+) + H2O = 2''-O-succinyl-ADP-D-ribose + nicotinamide + L-lysyl-[protein]. It carries out the reaction N(6)-glutaryl-L-lysyl-[protein] + NAD(+) + H2O = 2''-O-glutaryl-ADP-D-ribose + nicotinamide + L-lysyl-[protein]. In terms of biological role, NAD-dependent lysine demalonylase, desuccinylase and deglutarylase that specifically removes malonyl, succinyl and glutaryl groups on target proteins. Has weak NAD-dependent protein deacetylase activity; however this activity may not be physiologically relevant in vivo. This Daphnia pulex (Water flea) protein is NAD-dependent protein deacylase.